The primary structure comprises 241 residues: Uridylate kinase (241 aa).

15 to 18 (KLSG) contacts ATP. The interval 23–28 (GSEGFG) is involved in allosteric activation by GTP. G57 serves as a coordination point for UMP. G58 and R62 together coordinate ATP. Residues D77 and 138–145 (TGNPFFTT) contribute to the UMP site. Residues T165, F171, and D174 each contribute to the ATP site.

It belongs to the UMP kinase family. Homohexamer.

It localises to the cytoplasm. The catalysed reaction is UMP + ATP = UDP + ADP. It functions in the pathway pyrimidine metabolism; CTP biosynthesis via de novo pathway; UDP from UMP (UMPK route): step 1/1. Allosterically activated by GTP. Inhibited by UTP. Its function is as follows. Catalyzes the reversible phosphorylation of UMP to UDP. The polypeptide is Uridylate kinase (Vibrio vulnificus (strain CMCP6)).